Here is a 217-residue protein sequence, read N- to C-terminus: Ras-related protein Rab-19 (217 aa).

Residues Ser-26, Val-28, Gly-29, Lys-30, Thr-31, Cys-32, Tyr-42, Thr-43, Glu-44, Thr-45, and Thr-49 each contribute to the GTP site. Thr-31 contributes to the Mg(2+) binding site. A Switch 1 motif is present at residues 39–54 (SGVYTETQQNTIGVDF). Mg(2+)-binding residues include Thr-49 and Asp-72. The Switch 2 motif lies at 74–89 (AGQERFRTITQSYYRS). 7 residues coordinate GTP: Gly-75, Asn-130, Lys-131, Asp-133, Ser-161, Ala-162, and Lys-163. 2 S-geranylgeranyl cysteine lipidation sites follow: Cys-215 and Cys-217. Cysteine methyl ester is present on Cys-217.

It belongs to the small GTPase superfamily. Rab family. Requires Mg(2+) as cofactor.

The protein resides in the cell membrane. It carries out the reaction GTP + H2O = GDP + phosphate + H(+). Its activity is regulated as follows. Regulated by guanine nucleotide exchange factors (GEFs) which promote the exchange of bound GDP for free GTP. Regulated by GTPase activating proteins (GAPs) which increase the GTP hydrolysis activity. Inhibited by GDP dissociation inhibitors (GDIs). Functionally, the small GTPases Rab are key regulators of intracellular membrane trafficking, from the formation of transport vesicles to their fusion with membranes. Rabs cycle between an inactive GDP-bound form and an active GTP-bound form that is able to recruit to membranes different set of downstream effectors directly responsible for vesicle formation, movement, tethering and fusion. This Homo sapiens (Human) protein is Ras-related protein Rab-19.